Here is a 674-residue protein sequence, read N- to C-terminus: Inactivation-no-after-potential D protein (674 aa).

A PDZ 1 domain is found at 17–106 (MVTLDKTGKK…KIELEIQTFD (90 aa)). Positions 133-192 (QTTNNNASGGQGMGQGQGQGQGMAGMNRQQSMQKRNTTFTASMRQKHSNYADEDDEDTRD) are disordered. Residues 141–155 (GGQGMGQGQGQGQGM) are compositionally biased toward gly residues. Polar residues predominate over residues 159–175 (NRQQSMQKRNTTFTASM). PDZ domains follow at residues 249–332 (RIEV…TSRR) and 364–448 (ARTV…LTLK). Basic and acidic residues predominate over residues 458–475 (AAEEKKKEEAKKEEEKPQ). The segment at 458-481 (AAEEKKKEEAKKEEEKPQEPATAE) is disordered. PDZ domains follow at residues 489 to 577 (LIEL…RADP) and 584 to 664 (NVDL…TRPK). 2 positions are modified to phosphoserine: Ser598 and Ser600.

Interacts with the C-terminus of trp, and with norpA and inaC to form the inaD signaling complex. Interacts with Fkbp59, which together with trpl, rhodopsin and calmodulin may also be part of the inaD complex. Phosphorylated by inaC. In terms of tissue distribution, expressed in photoreceptor cells (R cells) of the compound eyes and ocelli.

It is found in the cell projection. The protein localises to the rhabdomere. Involved in the negative feedback regulation of the light-activated signaling cascade in photoreceptors through a calcium-mediated process. Interacts with tetrapeptide ligand located in C-terminal sequence of 3 key components of the visual cascade, tethering them and forming a macromolecular signaling phototransduction complex. In Drosophila melanogaster (Fruit fly), this protein is Inactivation-no-after-potential D protein (inaD).